The sequence spans 529 residues: Cytokinin dehydrogenase 4 (529 aa).

The signal sequence occupies residues 1-27 (MRGAMKPSIVHCLKLLMLLALGGVTMH). In terms of domain architecture, FAD-binding PCMH-type spans 63–244 (CSLLPAAVLH…TRARIALEPA (182 aa)). 3 residues coordinate FAD: alanine 99, glycine 101, and glycine 103. Histidine 104 is subject to Pros-8alpha-FAD histidine. Positions 105, 109, 168, 173, 179, 183, and 234 each coordinate FAD. Asparagine 285, asparagine 419, and asparagine 425 each carry an N-linked (GlcNAc...) asparagine glycan. FAD is bound by residues tyrosine 479 and glutamine 517.

This sequence belongs to the oxygen-dependent FAD-linked oxidoreductase family. Monomer. FAD serves as cofactor. Expressed in inflorescence meristems.

It localises to the secreted. The protein resides in the extracellular space. The catalysed reaction is N(6)-dimethylallyladenine + A + H2O = 3-methyl-2-butenal + adenine + AH2. Functionally, catalyzes the oxidation of cytokinins, a family of N(6)-substituted adenine derivatives that are plant hormones, where the substituent is an isopentenyl group. This is Cytokinin dehydrogenase 4 (CKX4) from Oryza sativa subsp. japonica (Rice).